Consider the following 1191-residue polypeptide: WASH complex subunit homolog 5 (1191 aa).

This sequence belongs to the strumpellin family. Component of the WASH complex.

It localises to the early endosome. Acts at least in part as component of the WASH complex which may regulate wash nucleation-promoting factor (NPF) activity and is required for its membrane targeting during endosomal sorting. During embryogenesis, not involved in the wash-dependent developmental migration of hemocytes anteriorly from the tail. In Drosophila melanogaster (Fruit fly), this protein is WASH complex subunit homolog 5.